A 420-amino-acid chain; its full sequence is MTRTAKLTIIPPGRPLSGRAMPPGSKSITNRALLLAGLAKGTSRMTGALKSDDTRYMADALRAMGVAIDEPDDTTFVVTGSGRLMPPKAPLFLGNAGTATRFLTAAAALVDGTVVVDGDEHMRKRPIGPLVEAMRTLGIDVSADTGCPPVTVRGTGRFEADRILIDGGLSSQYVSALLMMAAGGDRPVDIELVGEDIGALGYIDLTTAAMKAFGARVEKTSPVTWRVEPTGYRAADFVIEPDASAATYLWAAEVLSDGQIDLGVPNDAFTQPDAKAYETIAKFPHLPAEIDGSQMQDAVPTIAVLAAFNETPVRFVGIANLRVKECDRIRALSTGLNNIREGLAVEEGDDLIVHSDPALAGQTLPAEIDTFADHRIAMSFALAGLKIDGITILDPDCVGKTFPAYWRTLAALGVTYQGKD.

The interval 1–24 is disordered; sequence MTRTAKLTIIPPGRPLSGRAMPPG. Residues K26, S27, and R31 each contribute to the 3-phosphoshikimate site. K26 is a phosphoenolpyruvate binding site. Residues G97 and R125 each coordinate phosphoenolpyruvate. Residues S170, S171, Q172, D297, N320, and K324 each coordinate 3-phosphoshikimate. Q172 is a phosphoenolpyruvate binding site. Residue D297 is the Proton acceptor of the active site. 3 residues coordinate phosphoenolpyruvate: R328, R375, and K400.

Belongs to the EPSP synthase family. As to quaternary structure, monomer.

It localises to the cytoplasm. The catalysed reaction is 3-phosphoshikimate + phosphoenolpyruvate = 5-O-(1-carboxyvinyl)-3-phosphoshikimate + phosphate. Its pathway is metabolic intermediate biosynthesis; chorismate biosynthesis; chorismate from D-erythrose 4-phosphate and phosphoenolpyruvate: step 6/7. Functionally, catalyzes the transfer of the enolpyruvyl moiety of phosphoenolpyruvate (PEP) to the 5-hydroxyl of shikimate-3-phosphate (S3P) to produce enolpyruvyl shikimate-3-phosphate and inorganic phosphate. In Rhizobium etli (strain CIAT 652), this protein is 3-phosphoshikimate 1-carboxyvinyltransferase.